Here is a 366-residue protein sequence, read N- to C-terminus: NADH-quinone oxidoreductase subunit D (366 aa).

The protein belongs to the complex I 49 kDa subunit family. In terms of assembly, NDH-1 is composed of 14 different subunits. Subunits NuoB, C, D, E, F, and G constitute the peripheral sector of the complex.

It localises to the cell membrane. The catalysed reaction is a quinone + NADH + 5 H(+)(in) = a quinol + NAD(+) + 4 H(+)(out). Functionally, NDH-1 shuttles electrons from NADH, via FMN and iron-sulfur (Fe-S) centers, to quinones in the respiratory chain. The immediate electron acceptor for the enzyme in this species is believed to be a menaquinone. Couples the redox reaction to proton translocation (for every two electrons transferred, four hydrogen ions are translocated across the cytoplasmic membrane), and thus conserves the redox energy in a proton gradient. This is NADH-quinone oxidoreductase subunit D from Bacillus cereus (strain ATCC 14579 / DSM 31 / CCUG 7414 / JCM 2152 / NBRC 15305 / NCIMB 9373 / NCTC 2599 / NRRL B-3711).